We begin with the raw amino-acid sequence, 304 residues long: MWFKNLTLYRFNKPFAVETEALETALADFTFSPCSSQDISKFGFSNALGKKGSSLVHSANNRHLICATKEEKMLPGQVIKEALEEKVALIEDEENRKLAKKEKDALKDEIITSLLPRAFSRRSQTRALILPELEMILVDSSSATKAEELLALLRKALGSLPVIPLSFKAPVESHLTEWLKNGSAPLPFEMQDEAELKSEADEGGIVRFKQQDLKEDEVLAHLATGKQVHKLALHFGQSIALLLQSDASVKRLKFSEEFRAGNDEVGTDDPMARLDADFALMGSELVALMHALVSALGGLEETQD.

Belongs to the RdgC family.

It is found in the cytoplasm. The protein resides in the nucleoid. May be involved in recombination. This Shewanella sp. (strain W3-18-1) protein is Recombination-associated protein RdgC.